The primary structure comprises 49 residues: Agglutinin-1 (49 aa).

As to quaternary structure, homooligomer. In terms of processing, glycosylated.

Its function is as follows. Beta-galactoside specific lectin. Has a hemagglutinating activity on erythrocytes. This is Agglutinin-1 from Pomacea flagellata (Apple snail).